Consider the following 197-residue polypeptide: Chromophore lyase CpcT/CpeT (197 aa).

It belongs to the CpcT/CpeT biliprotein lyase family.

Covalently attaches a chromophore to Cys residue(s) of phycobiliproteins. The protein is Chromophore lyase CpcT/CpeT of Synechococcus sp. (strain WH8103).